A 120-amino-acid chain; its full sequence is Large ribosomal subunit protein bL19 (120 aa).

This sequence belongs to the bacterial ribosomal protein bL19 family.

Functionally, this protein is located at the 30S-50S ribosomal subunit interface and may play a role in the structure and function of the aminoacyl-tRNA binding site. The chain is Large ribosomal subunit protein bL19 from Chlorobium phaeobacteroides (strain DSM 266 / SMG 266 / 2430).